The chain runs to 31 residues: Photosystem II reaction center protein T (31 aa).

The chain crosses the membrane as a helical span at residues S3–F23.

This sequence belongs to the PsbT family. In terms of assembly, PSII is composed of 1 copy each of membrane proteins PsbA, PsbB, PsbC, PsbD, PsbE, PsbF, PsbH, PsbI, PsbJ, PsbK, PsbL, PsbM, PsbT, PsbX, PsbY, PsbZ, Psb30/Ycf12, peripheral proteins PsbO, CyanoQ (PsbQ), PsbU, PsbV and a large number of cofactors. It forms dimeric complexes.

Its subcellular location is the cellular thylakoid membrane. Its function is as follows. Found at the monomer-monomer interface of the photosystem II (PS II) dimer, plays a role in assembly and dimerization of PSII. PSII is a light-driven water plastoquinone oxidoreductase, using light energy to abstract electrons from H(2)O, generating a proton gradient subsequently used for ATP formation. This is Photosystem II reaction center protein T from Synechococcus sp. (strain WH7803).